Reading from the N-terminus, the 420-residue chain is Putative movement protein (420 aa).

Low complexity-rich tracts occupy residues 1–18 (MPLT…TSFS) and 30–59 (TSCS…GSCP). Disordered regions lie at residues 1–77 (MPLT…TARP), 137–181 (SMSR…SARS), 195–219 (RPKT…STRT), 235–281 (IMSE…RPPP), 327–370 (PSAG…RPIQ), and 396–420 (LPPP…QPWP). A compositionally biased stretch (pro residues) spans 60–69 (KTPPGTPPLP). Over residues 137-157 (SMSRRATQPPTTRSRVRPSTG) the composition is skewed to polar residues. Residues 158–181 (SRPPVSPLVTSSSPSPFSTLSARS) show a composition bias toward low complexity. Positions 253 to 263 (GLRSASLSTAG) are enriched in polar residues. The segment covering 327-348 (PSAGSSPFTPTVSGCSASTSSA) has biased composition (low complexity).

In terms of biological role, cell-to-cell movement. This chain is Putative movement protein, found in Maize rayado fino virus (isolate Costa Rica/Guapiles) (MRFV).